The sequence spans 114 residues: Cytochrome b-c1 complex subunit 1, mitochondrial (114 aa).

Lys31 carries the post-translational modification N6-acetyllysine.

It belongs to the peptidase M16 family. UQCRC1/QCR1 subfamily. Component of the ubiquinol-cytochrome c oxidoreductase (cytochrome b-c1 complex, complex III, CIII), a multisubunit enzyme composed of 11 subunits. The complex is composed of 3 respiratory subunits cytochrome b, cytochrome c1 and Rieske protein UQCRFS1, 2 core protein subunits UQCRC1/QCR1 and UQCRC2/QCR2, and 6 low-molecular weight protein subunits UQCRH/QCR6, UQCRB/QCR7, UQCRQ/QCR8, UQCR10/QCR9, UQCR11/QCR10 and subunit 9, the cleavage product of Rieske protein UQCRFS1. The complex exists as an obligatory dimer and forms supercomplexes (SCs) in the inner mitochondrial membrane with NADH-ubiquinone oxidoreductase (complex I, CI) and cytochrome c oxidase (complex IV, CIV), resulting in different assemblies (supercomplex SCI(1)III(2)IV(1) and megacomplex MCI(2)III(2)IV(2)). Interacts with UQCC6. Interacts with STMP1.

The protein resides in the mitochondrion inner membrane. Its function is as follows. Component of the ubiquinol-cytochrome c oxidoreductase, a multisubunit transmembrane complex that is part of the mitochondrial electron transport chain which drives oxidative phosphorylation. The respiratory chain contains 3 multisubunit complexes succinate dehydrogenase (complex II, CII), ubiquinol-cytochrome c oxidoreductase (cytochrome b-c1 complex, complex III, CIII) and cytochrome c oxidase (complex IV, CIV), that cooperate to transfer electrons derived from NADH and succinate to molecular oxygen, creating an electrochemical gradient over the inner membrane that drives transmembrane transport and the ATP synthase. The cytochrome b-c1 complex catalyzes electron transfer from ubiquinol to cytochrome c, linking this redox reaction to translocation of protons across the mitochondrial inner membrane, with protons being carried across the membrane as hydrogens on the quinol. In the process called Q cycle, 2 protons are consumed from the matrix, 4 protons are released into the intermembrane space and 2 electrons are passed to cytochrome c. The 2 core subunits UQCRC1/QCR1 and UQCRC2/QCR2 are homologous to the 2 mitochondrial-processing peptidase (MPP) subunits beta-MPP and alpha-MPP respectively, and they seem to have preserved their MPP processing properties. May be involved in the in situ processing of UQCRFS1 into the mature Rieske protein and its mitochondrial targeting sequence (MTS)/subunit 9 when incorporated into complex III. Seems to play an important role in the maintenance of proper mitochondrial function in nigral dopaminergic neurons. This chain is Cytochrome b-c1 complex subunit 1, mitochondrial, found in Mesocricetus auratus (Golden hamster).